The sequence spans 452 residues: Phosphoglucosamine mutase (452 aa).

The active-site Phosphoserine intermediate is Ser88. Positions 88, 234, 236, and 238 each coordinate Mg(2+). Phosphoserine is present on Ser88.

The protein belongs to the phosphohexose mutase family. Requires Mg(2+) as cofactor. Activated by phosphorylation.

The enzyme catalyses alpha-D-glucosamine 1-phosphate = D-glucosamine 6-phosphate. Catalyzes the conversion of glucosamine-6-phosphate to glucosamine-1-phosphate. In Methanococcus aeolicus (strain ATCC BAA-1280 / DSM 17508 / OCM 812 / Nankai-3), this protein is Phosphoglucosamine mutase.